Here is a 313-residue protein sequence, read N- to C-terminus: Homoserine O-succinyltransferase (313 aa).

Residue C142 is the Acyl-thioester intermediate of the active site. Positions 163 and 192 each coordinate substrate. The Proton acceptor role is filled by H235. The active site involves E237. Position 249 (R249) interacts with substrate.

This sequence belongs to the MetA family.

It localises to the cytoplasm. The catalysed reaction is L-homoserine + succinyl-CoA = O-succinyl-L-homoserine + CoA. Its pathway is amino-acid biosynthesis; L-methionine biosynthesis via de novo pathway; O-succinyl-L-homoserine from L-homoserine: step 1/1. Transfers a succinyl group from succinyl-CoA to L-homoserine, forming succinyl-L-homoserine. The protein is Homoserine O-succinyltransferase of Vibrio vulnificus (strain CMCP6).